Here is a 259-residue protein sequence, read N- to C-terminus: Steroidogenic acute regulatory-like protein 1 (259 aa).

A signal peptide spans 1–20 (MTLLPFTCLILLYSLGSVMS). Residues 43-254 (YATALKTCGE…NRRHFQNLKA (212 aa)) enclose the START domain.

This Caenorhabditis elegans protein is Steroidogenic acute regulatory-like protein 1 (strl-1).